We begin with the raw amino-acid sequence, 379 residues long: Pectin lyase A (379 aa).

An N-terminal signal peptide occupies residues 1–20 (MKYSTIFSAAAAVFAGSAAA). Cystine bridges form between cysteine 83-cysteine 102 and cysteine 92-cysteine 226. Residue threonine 88 is glycosylated (O-linked (Man) threonine). Asparagine 129 carries an N-linked (GlcNAc...) asparagine glycan. Residue arginine 256 is part of the active site. Cysteine 322 and cysteine 330 are joined by a disulfide. Serine 368 carries an O-linked (Man) serine; in strain 4M-147 glycan.

This sequence belongs to the polysaccharide lyase 1 family. N-glycosylated at Asn-129 and O-glycosylated at Thr-88 when expressed in Aspergillus nidulans. The protein from strain 4M-147 is O-glycosylated at Thr-88 and Ser-368. PubMed:9195887 modeled GalNAc at the O-glycosylation site, a glycosylation not observed in fungi. The O-linked saccharide is probably mannose.

It is found in the secreted. It catalyses the reaction Eliminative cleavage of (1-&gt;4)-alpha-D-galacturonan methyl ester to give oligosaccharides with 4-deoxy-6-O-methyl-alpha-D-galact-4-enuronosyl groups at their non-reducing ends.. Pectinolytic enzymes consist of four classes of enzymes: pectin lyase, polygalacturonase, pectin methylesterase and rhamnogalacturonase. Among pectinolytic enzymes, pectin lyase is the most important in depolymerization of pectin, since it cleaves internal glycosidic bonds of highly methylated pectins. This is Pectin lyase A (pelA) from Aspergillus niger.